Reading from the N-terminus, the 577-residue chain is Arginine--tRNA ligase (577 aa).

The 'HIGH' region signature appears at 122-132 (PNVAKEMHVGH).

Belongs to the class-I aminoacyl-tRNA synthetase family. Monomer.

The protein resides in the cytoplasm. The catalysed reaction is tRNA(Arg) + L-arginine + ATP = L-arginyl-tRNA(Arg) + AMP + diphosphate. The polypeptide is Arginine--tRNA ligase (Escherichia coli O139:H28 (strain E24377A / ETEC)).